A 62-amino-acid chain; its full sequence is Conotoxin Lt5.5 (62 aa).

An N-terminal signal peptide occupies residues 1–22; it reads MRCLQVFIIFLLLIPSPPSVDA. The propeptide occupies 23–48; sequence QRKTKDDVPLASFHDNAKRTLKRLWN.

Belongs to the conotoxin T superfamily. In terms of processing, contains 2 disulfide bonds that can be either 'C1-C3, C2-C4' or 'C1-C4, C2-C3', since these disulfide connectivities have been observed for conotoxins with cysteine framework V (for examples, see AC P0DQQ7 and AC P81755). Expressed by the venom duct.

The protein resides in the secreted. This chain is Conotoxin Lt5.5, found in Conus litteratus (Lettered cone).